Consider the following 874-residue polypeptide: Isopimaradiene synthase, chloroplastic (874 aa).

The segment covering 1–12 has biased composition (polar residues); that stretch reads MALPSSSLSSRI. A disordered region spans residues 1 to 20; it reads MALPSSSLSSRIPTGPHPLT. The transit peptide at 1-37 directs the protein to the chloroplast; sequence MALPSSSLSSRIPTGPHPLTHTQCIPHFSTTINAGIS. Mg(2+) is bound by residues D407, D409, D626, D630, N770, and E778. Positions 407-410 match the DXDD motif motif; the sequence is DIDD. The DDXXD motif motif lies at 626 to 630; that stretch reads DDLYD.

This sequence belongs to the terpene synthase family. Tpsd subfamily. Requires Mg(2+) as cofactor. Mn(2+) is required as a cofactor.

It localises to the plastid. The protein resides in the chloroplast. The enzyme catalyses (+)-copalyl diphosphate = isopimara-8(14),15-diene + diphosphate. It participates in terpene metabolism; oleoresin biosynthesis. Functionally, terpene synthase (TPS) involved in the biosynthesis of diterpene natural products included in conifer oleoresin secretions and volatile emissions; these compounds contribute to biotic and abiotic stress defense against herbivores and pathogens. Catalyzes the conversion of (+)-copalyl diphosphate ((+)-CPP) to isopimaradiene. This chain is Isopimaradiene synthase, chloroplastic, found in Picea sitchensis (Sitka spruce).